A 192-amino-acid chain; its full sequence is 3-hydroxyanthranilate 3,4-dioxygenase 1 (192 aa).

O2 is bound at residue R50. H54, E60, and H102 together coordinate Fe cation. E60 serves as a coordination point for substrate. 2 residues coordinate substrate: R106 and E116. C131, C134, C168, and C171 together coordinate a divalent metal cation.

This sequence belongs to the 3-HAO family. Fe(2+) is required as a cofactor.

It localises to the cytoplasm. It carries out the reaction 3-hydroxyanthranilate + O2 = (2Z,4Z)-2-amino-3-carboxymuconate 6-semialdehyde. It functions in the pathway cofactor biosynthesis; NAD(+) biosynthesis; quinolinate from L-kynurenine: step 3/3. In terms of biological role, catalyzes the oxidative ring opening of 3-hydroxyanthranilate to 2-amino-3-carboxymuconate semialdehyde, which spontaneously cyclizes to quinolinate. The polypeptide is 3-hydroxyanthranilate 3,4-dioxygenase 1 (bna1-1) (Aspergillus fumigatus (strain CBS 144.89 / FGSC A1163 / CEA10) (Neosartorya fumigata)).